We begin with the raw amino-acid sequence, 3230 residues long: Helicase SRCAP (3230 aa).

Residues 1 to 71 (MQSSPSPAHP…GPPDGATVPL (71 aa)) are disordered. Residues 26-41 (GSNPVSPASSSSPASS) show a composition bias toward low complexity. The HSA domain maps to 124–196 (LPKVPEPPRP…EQAKLRRIAS (73 aa)). Disordered stretches follow at residues 253 to 547 (QPLT…EEDD) and 559 to 581 (EEQS…LGPK). Positions 257 to 273 (SSKAGSSPCLGSSSAAS) are enriched in low complexity. Residues 283-313 (DDEDGDFQPQEDEEEDDEETIEVEEQQEGND) are compositionally biased toward acidic residues. The segment covering 315-329 (EAQRREIELLRREGE) has biased composition (basic and acidic residues). Over residues 337 to 356 (RSLPPQLLEGPSSPSQTPSS) the composition is skewed to low complexity. Positions 397–425 (DEDDEEFTANEEEAEDEEDTIAAEEQLEG) are enriched in acidic residues. The span at 426 to 441 (EVDHAMELSELAREGE) shows a compositional bias: basic and acidic residues. Acidic residues-rich tracts occupy residues 462–490 (SEDE…EPPQ), 503–517 (RSED…EEET), and 524–533 (EESESEESED). The 166-residue stretch at 630–795 (VTMYEKKLNG…WSLMHFLMPH (166 aa)) folds into the Helicase ATP-binding domain. 643–650 (DEMGLGKT) lines the ATP pocket. Disordered regions lie at residues 1017–1045 (APLG…PQVL), 1058–1125 (PPLI…PGSS), and 1138–1166 (TFPP…TPAP). 2 stretches are compositionally biased toward pro residues: residues 1018–1030 (PLGP…PPGP) and 1058–1076 (PPLI…PPLQ). The segment covering 1093–1107 (LSGTSRPPTPTLSLK) has biased composition (low complexity). The span at 1108–1123 (PTPPAPVRLSPAPPPG) shows a compositional bias: pro residues. The segment covering 1138–1160 (TFPPAAATTTSTTTATATTTAVP) has biased composition (low complexity). At Ser1172 the chain carries Phosphoserine. Disordered regions lie at residues 1320-1366 (GLTP…APMP), 1406-1425 (SLPG…PLAS), 1629-1760 (VPVM…ASPV), and 1839-1893 (SRLP…EEKR). The segment covering 1323–1336 (PVPPLAPAPRPPSS) has biased composition (pro residues). Residues 1337–1360 (GLPAVLNPRPTLTPGRLPTPTLGT) show a composition bias toward low complexity. Positions 1675–1691 (PASTQTLALAPALAPTL) are enriched in low complexity. Residues 1692–1733 (GGSSPSQTLSLGTGNPQGPFPTQTLSLTPASSLVPTPAQTLS) show a composition bias toward polar residues. Positions 1750-1760 (PAPPLAPASPV) are enriched in pro residues. Residues 2044–2197 (KLQTLAVLLR…DMAIEGGNFT (154 aa)) enclose the Helicase C-terminal domain. Disordered regions lie at residues 2214–2233 (LEEP…EETV), 2271–2298 (FNEN…MSRA), 2327–2453 (VSRE…APAA), 2564–2583 (LELA…VPPK), 2598–3081 (KNLS…GRKS), and 3095–3230 (DLAD…KAKT). Low complexity predominate over residues 2215–2225 (EEPSSSSVPSA). Composition is skewed to basic and acidic residues over residues 2284–2298 (EAGR…MSRA), 2327–2358 (VSRE…RLPQ), and 2386–2403 (KAPE…RGAR). Pro residues predominate over residues 2438 to 2448 (RPAPRPRPTPA). 2 stretches are compositionally biased toward low complexity: residues 2564 to 2579 (LELA…SLSL) and 2600 to 2611 (LSLTPSAPSLTL). Residues 2669–2679 (EADRTSEELTE) show a composition bias toward basic and acidic residues. The segment covering 2694-2712 (VTAEVAAPSTSSSATSSPE) has biased composition (low complexity). A compositionally biased stretch (polar residues) spans 2782 to 2794 (SETSASPGSPSVR). Residues 2807–2817 (GPCEAAPSSSL) show a composition bias toward low complexity. Residues 2856-2868 (VKRRRGRPPKKNR) are compositionally biased toward basic residues. The a.T hook 1 DNA-binding region spans 2857-2869 (KRRRGRPPKKNRS). The span at 2913 to 2926 (IPGPQPLGPQPVHR) shows a compositional bias: pro residues. The a.T hook 2 DNA-binding region spans 2936 to 2948 (KRRRGRPPKARDL). A compositionally biased stretch (polar residues) spans 2953–2965 (TISSAGDGNSESR). Pro residues predominate over residues 2967–2982 (QPPPHPSPLTPLPPLL). The span at 2983–3002 (VCPTATVANTVTTVTISTSP) shows a compositional bias: low complexity. A DNA-binding region (a.T hook 3) is located at residues 3004 to 3016 (KRKRGRPPKNPPS). Over residues 3011-3020 (PKNPPSPRPS) the composition is skewed to pro residues. Positions 3044–3053 (PQGQGESEGS) are enriched in low complexity. Residues 3168–3184 (SVEESEAEASGEEEEGD) show a composition bias toward acidic residues.

This sequence belongs to the SNF2/RAD54 helicase family. SWR1 subfamily. As to quaternary structure, interacts with CREBBP and EP300. May be part of a complex containing SRCAP, CREBBP, CARM1 and GRIP1. Component of the chromatin-remodeling SRCAP complex composed of at least SRCAP, DMAP1, RUVBL1, RUVBL2, ACTL6A, YEATS4, VPS72, ACTR6 and ZNHIT1. Component of a NuA4-related complex which contains EP400, TRRAP/PAF400, SRCAP, BRD8/SMAP, EPC1, DMAP1/DNMAP1, RUVBL1/TIP49, RUVBL2, actin, ACTL6A/BAF53A, VPS72 and YEATS4/GAS41. In terms of assembly, (Microbial infection) Interacts with hepatitis C virus (HCV) NS5A. (Microbial infection) Interacts with human adenovirus 2 DBP.

The protein localises to the nucleus. In terms of biological role, catalytic component of the SRCAP complex which mediates the ATP-dependent exchange of histone H2AZ/H2B dimers for nucleosomal H2A/H2B, leading to transcriptional regulation of selected genes by chromatin remodeling. Acts as a coactivator for CREB-mediated transcription, steroid receptor-mediated transcription, and Notch-mediated transcription. This chain is Helicase SRCAP (SRCAP), found in Homo sapiens (Human).